The following is a 430-amino-acid chain: Putative FBD-associated F-box protein At5g56440 (430 aa).

In terms of domain architecture, F-box spans 1–49; the sequence is MDRISLLPDDVVFKILSFVPTKVVVSTNLLSKRWRYLWKHVPKLDYRDP. The FBD domain occupies 349 to 399; it reads QWEQPSSVPKCLISSLETVEWIDYKGREVEKKVVMYLLENSRQLKTMAIRS.

This is Putative FBD-associated F-box protein At5g56440 from Arabidopsis thaliana (Mouse-ear cress).